We begin with the raw amino-acid sequence, 234 residues long: Triosephosphate isomerase (234 aa).

Residue Asn8–Lys10 coordinates substrate. His90 serves as the catalytic Electrophile. Glu159 (proton acceptor) is an active-site residue. Substrate contacts are provided by residues Gly165, Ser197, and Gly218–Ser219.

Homodimer.

The protein resides in the cytoplasm. The enzyme catalyses D-glyceraldehyde 3-phosphate = dihydroxyacetone phosphate. Its pathway is carbohydrate biosynthesis; gluconeogenesis. It participates in carbohydrate degradation; glycolysis; D-glyceraldehyde 3-phosphate from glycerone phosphate: step 1/1. In terms of biological role, involved in the gluconeogenesis. Catalyzes stereospecifically the conversion of dihydroxyacetone phosphate (DHAP) to D-glyceraldehyde-3-phosphate (G3P). This Helicobacter pylori (strain ATCC 700392 / 26695) (Campylobacter pylori) protein is Triosephosphate isomerase.